Here is a 185-residue protein sequence, read N- to C-terminus: uncharacterized protein (185 aa).

The signal sequence occupies residues 1–24; it reads MPCNRAVFGAFVLALLISLQSVYF. A helical transmembrane segment spans residues 50–70; it reads VAVNVIVEFSFDILFFLCGLL. The segment covering 96-113 has biased composition (basic and acidic residues); that stretch reads ELEHVSSRRRNDSRDDST. The interval 96-185 is disordered; sequence ELEHVSSRRR…LFTAGGIGLP (90 aa). The span at 114 to 126 shows a compositional bias: polar residues; the sequence is VRNVSKTSPLASQ. Positions 127 to 138 are enriched in basic and acidic residues; the sequence is RSRDHFDGDPRE. Positions 139–155 are enriched in pro residues; sequence PAPPAYSPADFYPPPAS.

It is found in the host membrane. This is an uncharacterized protein from Colorado tick fever virus (strain USA/Florio N-7180) (CTFV).